The following is a 498-amino-acid chain: Cystathionine beta-synthase (498 aa).

A disordered region spans residues 1–25; it reads MSAPEGPSKCTWTPNTTENTPHTTR. The span at 11 to 22 shows a compositional bias: low complexity; the sequence is TWTPNTTENTPH. Residue Lys-73 is modified to N6-(pyridoxal phosphate)lysine. Pyridoxal 5'-phosphate is bound by residues Asn-103, 210–214, and Ser-302; that span reads GTGGT. CBS domains follow at residues 374–430 and 435–497; these read TLPK…KKAV and VSKV…SQQK.

It belongs to the cysteine synthase/cystathionine beta-synthase family. Pyridoxal 5'-phosphate is required as a cofactor.

The enzyme catalyses L-homocysteine + L-serine = L,L-cystathionine + H2O. It functions in the pathway amino-acid biosynthesis; L-cysteine biosynthesis; L-cysteine from L-homocysteine and L-serine: step 1/2. The protein is Cystathionine beta-synthase (cysB) of Dictyostelium discoideum (Social amoeba).